A 485-amino-acid chain; its full sequence is NADH-quinone oxidoreductase subunit N (485 aa).

14 helical membrane passes run leucine 8 to isoleucine 28, phenylalanine 35 to valine 55, glycine 71 to alanine 91, phenylalanine 105 to leucine 125, threonine 127 to phenylalanine 147, tyrosine 159 to alanine 179, leucine 203 to phenylalanine 223, proline 235 to methionine 255, valine 271 to glutamine 291, leucine 297 to glutamine 317, valine 326 to leucine 346, alanine 373 to isoleucine 393, tryptophan 408 to valine 430, and isoleucine 455 to isoleucine 475.

Belongs to the complex I subunit 2 family. NDH-1 is composed of 13 different subunits. Subunits NuoA, H, J, K, L, M, N constitute the membrane sector of the complex.

The protein localises to the cell inner membrane. It catalyses the reaction a quinone + NADH + 5 H(+)(in) = a quinol + NAD(+) + 4 H(+)(out). Functionally, NDH-1 shuttles electrons from NADH, via FMN and iron-sulfur (Fe-S) centers, to quinones in the respiratory chain. The immediate electron acceptor for the enzyme in this species is believed to be ubiquinone. Couples the redox reaction to proton translocation (for every two electrons transferred, four hydrogen ions are translocated across the cytoplasmic membrane), and thus conserves the redox energy in a proton gradient. This Salmonella paratyphi A (strain ATCC 9150 / SARB42) protein is NADH-quinone oxidoreductase subunit N.